The following is a 691-amino-acid chain: Protein vreteno (691 aa).

The disordered stretch occupies residues Q128 to E155. Tudor domains lie at K366–L427 and A573–P630.

As to quaternary structure, interacts with aub and piwi. In terms of tissue distribution, gonad-specific.

The protein resides in the cytoplasm. It is found in the cytoplasmic ribonucleoprotein granule. Functionally, gonad-specific protein essential for germline development to repress transposable elements and preventing their mobilization, which is essential for the germline integrity. Acts via the piRNA metabolic process in both germline and somatic gonadal tissues by mediating the repression of transposable elements during meiosis. Required for primary piRNA biogenesis in both germline and somatic gonadal tissues. The polypeptide is Protein vreteno (vret) (Drosophila melanogaster (Fruit fly)).